A 41-amino-acid polypeptide reads, in one-letter code: Antifungal peptide 2 (41 aa).

At Q1 the chain carries Pyrrolidone carboxylic acid. Cystine bridges form between C3–C17, C7–C37, C11–C23, C16–C30, and C35–C39. In terms of domain architecture, Chitin-binding type-1 spans 4–41 (ASRCPRPCNAGLCCSIYGYCGSGAAYCGAGNCRCQCRG).

In terms of assembly, monomer.

In terms of biological role, has antifungal activity against P.infestans, A.lycopersici, V.dahliae, G.zeae, A.nicotianae, F.moniliforme, F.oxysporum and C.gossypii. The chain is Antifungal peptide 2 from Eucommia ulmoides (Hardy rubber tree).